Consider the following 194-residue polypeptide: Peptidyl-tRNA hydrolase (194 aa).

Residue Y17 coordinates tRNA. The Proton acceptor role is filled by H22. TRNA contacts are provided by Y68, N70, and N116.

Belongs to the PTH family. As to quaternary structure, monomer.

It localises to the cytoplasm. The enzyme catalyses an N-acyl-L-alpha-aminoacyl-tRNA + H2O = an N-acyl-L-amino acid + a tRNA + H(+). In terms of biological role, hydrolyzes ribosome-free peptidyl-tRNAs (with 1 or more amino acids incorporated), which drop off the ribosome during protein synthesis, or as a result of ribosome stalling. Functionally, catalyzes the release of premature peptidyl moieties from peptidyl-tRNA molecules trapped in stalled 50S ribosomal subunits, and thus maintains levels of free tRNAs and 50S ribosomes. In Azotobacter vinelandii (strain DJ / ATCC BAA-1303), this protein is Peptidyl-tRNA hydrolase.